Reading from the N-terminus, the 75-residue chain is Brevinin-2HS2A (75 aa).

The N-terminal stretch at M1–C22 is a signal peptide. Residues Q23–V40 constitute a propeptide that is removed on maturation. An intrachain disulfide couples C69 to C75.

This sequence belongs to the frog skin active peptide (FSAP) family. Brevinin subfamily. Expressed by the skin glands.

The protein localises to the secreted. Its function is as follows. Has antimicrobial activity against some Gram-positive bacteria and fungi but has no activity against a range of Gram-negative bacteria except P.faecalis. Has antimicrobial activity against the Gram-positive bacteria S.aureus ATCC 25923 (MIC=19 uM), B.licheniformis X39 (MIC=37.5 uM) and R.rhodochrous X15 (MIC=9.5 uM), is virtually inactive against E.faecium 091299 (MIC=150 uM) and S.carnosus KHS (MIC=150 uM) and inactive against E.faecalis 981. Active against the Gram-negative bacterium P.faecalis X29 (MIC=9.5 uM) and is inactive against E.coli, P.aeruginosa and S.typhi. Active against C.albicans ATCC 2002 (MIC=19 uM) and is also active against the slime mold 090223 (MIC=37.5 uM). Has extremely low hemolytic activity against human erythrocytes (LC(50)=300 uM). The protein is Brevinin-2HS2A of Odorrana hainanensis (Odor frog).